The sequence spans 160 residues: Cytochrome b6-f complex subunit 4 (160 aa).

The next 3 helical transmembrane spans lie at 36–56 (LLYI…GLSV), 95–115 (LLGV…PFIE), and 131–151 (TVFL…ALPI).

The protein belongs to the cytochrome b family. PetD subfamily. In terms of assembly, the 4 large subunits of the cytochrome b6-f complex are cytochrome b6, subunit IV (17 kDa polypeptide, petD), cytochrome f and the Rieske protein, while the 4 small subunits are petG, petL, petM and petN. The complex functions as a dimer.

It is found in the plastid. The protein resides in the chloroplast thylakoid membrane. Component of the cytochrome b6-f complex, which mediates electron transfer between photosystem II (PSII) and photosystem I (PSI), cyclic electron flow around PSI, and state transitions. The polypeptide is Cytochrome b6-f complex subunit 4 (Chaetosphaeridium globosum (Charophycean green alga)).